The sequence spans 327 residues: Phospho-N-acetylmuramoyl-pentapeptide-transferase (327 aa).

Transmembrane regions (helical) follow at residues 3–23 (TAII…PAFI), 51–71 (TMGG…IALF), 79–99 (VTTI…DDFL), 115–135 (LFLQ…HGGG), 140–160 (VFGF…FWLV), 172–192 (IDGL…VIAL), 197–217 (FDLL…FGFN), 223–243 (IFMG…LSIA), 248–268 (WTLL…MLQV), and 306–326 (VDFL…AILY).

This sequence belongs to the glycosyltransferase 4 family. MraY subfamily. Mg(2+) serves as cofactor.

It localises to the cell membrane. The catalysed reaction is UDP-N-acetyl-alpha-D-muramoyl-L-alanyl-gamma-D-glutamyl-L-lysyl-D-alanyl-D-alanine + di-trans,octa-cis-undecaprenyl phosphate = Mur2Ac(oyl-L-Ala-gamma-D-Glu-L-Lys-D-Ala-D-Ala)-di-trans,octa-cis-undecaprenyl diphosphate + UMP. It participates in cell wall biogenesis; peptidoglycan biosynthesis. Functionally, catalyzes the initial step of the lipid cycle reactions in the biosynthesis of the cell wall peptidoglycan: transfers peptidoglycan precursor phospho-MurNAc-pentapeptide from UDP-MurNAc-pentapeptide onto the lipid carrier undecaprenyl phosphate, yielding undecaprenyl-pyrophosphoryl-MurNAc-pentapeptide, known as lipid I. The protein is Phospho-N-acetylmuramoyl-pentapeptide-transferase of Streptococcus gordonii (strain Challis / ATCC 35105 / BCRC 15272 / CH1 / DL1 / V288).